A 507-amino-acid polypeptide reads, in one-letter code: Probable cytosol aminopeptidase (507 aa).

Positions 275 and 280 each coordinate Mn(2+). Lysine 287 is a catalytic residue. Mn(2+)-binding residues include aspartate 298, aspartate 357, and glutamate 359. Residue arginine 361 is part of the active site.

It belongs to the peptidase M17 family. The cofactor is Mn(2+).

It localises to the cytoplasm. The catalysed reaction is Release of an N-terminal amino acid, Xaa-|-Yaa-, in which Xaa is preferably Leu, but may be other amino acids including Pro although not Arg or Lys, and Yaa may be Pro. Amino acid amides and methyl esters are also readily hydrolyzed, but rates on arylamides are exceedingly low.. The enzyme catalyses Release of an N-terminal amino acid, preferentially leucine, but not glutamic or aspartic acids.. In terms of biological role, presumably involved in the processing and regular turnover of intracellular proteins. Catalyzes the removal of unsubstituted N-terminal amino acids from various peptides. The protein is Probable cytosol aminopeptidase of Acidobacterium capsulatum (strain ATCC 51196 / DSM 11244 / BCRC 80197 / JCM 7670 / NBRC 15755 / NCIMB 13165 / 161).